Here is a 401-residue protein sequence, read N- to C-terminus: Large ribosomal subunit protein uL3 (401 aa).

The disordered stretch occupies residues 1-21 (MSHRKFSAPRHGHMGFTPKKR).

Belongs to the universal ribosomal protein uL3 family.

It localises to the cytoplasm. Functionally, the L3 protein is a component of the large subunit of cytoplasmic ribosomes. The chain is Large ribosomal subunit protein uL3 (rpl-3) from Caenorhabditis briggsae.